Here is a 669-residue protein sequence, read N- to C-terminus: Coagulation factor XIII B chain (669 aa).

Positions 1–21 (MMTLRHLPFILLLILSGELYA) are cleaved as a signal peptide. Sushi domains lie at 25–89 (QCDF…PRCY), 90–149 (KKCL…SCRK), 152–211 (ETCL…QCNK), 212–270 (LMCS…ICEG), 273–330 (NRCP…KCIE), 335–392 (VACE…ECVE), 395–453 (ENCK…VCLE), 454–517 (PCTI…PMCI), 523–581 (GMCA…SCLE), and 582–648 (PCTL…PKCT). Cystine bridges form between Cys26–Cys77, Cys60–Cys88, Cys92–Cys136, Cys119–Cys147, Cys154–Cys198, Cys181–Cys209, Cys214–Cys256, Cys242–Cys268, Cys275–Cys317, Cys303–Cys328, Cys337–Cys379, Cys365–Cys390, Cys397–Cys440, Cys426–Cys451, Cys455–Cys506, Cys487–Cys516, Cys525–Cys568, Cys554–Cys579, Cys583–Cys637, and Cys617–Cys647. Residue Asn163 is glycosylated (N-linked (GlcNAc...) asparagine). The N-linked (GlcNAc...) asparagine glycan is linked to Asn546.

Tetramer of two A chains (F13A1) and two B (F13B) chains. In terms of tissue distribution, predominantly expressed in liver and kidney.

Its subcellular location is the secreted. Functionally, the B chain of factor XIII is not catalytically active, but is thought to stabilize the A subunits and regulate the rate of transglutaminase formation by thrombin. This Mus musculus (Mouse) protein is Coagulation factor XIII B chain (F13b).